A 1286-amino-acid polypeptide reads, in one-letter code: Ankyrin-repeat and fibronectin type III domain-containing 1 (1286 aa).

ANK repeat units follow at residues Gln-274 to Leu-303 and Glu-311 to Pro-340. A Fibronectin type-III domain is found at Val-411–Ser-507. Positions Gly-748–Lys-755 are highly conserved peptide sequence. Positions Ser-999–Ser-1011 are enriched in polar residues. 4 disordered regions span residues Ser-999–Cys-1032, Lys-1086–His-1106, Ala-1187–Pro-1207, and Ala-1242–Leu-1286. A compositionally biased stretch (low complexity) spans Ser-1260–Pro-1277.

In terms of tissue distribution, expressed in both the suprachiasmatic nucleus and dorsal medial hypothalamus.

Its function is as follows. May play a role in neuronal function. This Mus musculus (Mouse) protein is Ankyrin-repeat and fibronectin type III domain-containing 1.